The following is a 204-amino-acid chain: Nascent polypeptide-associated complex subunit alpha-like protein 3 (204 aa).

Residues 1–23 (MTAEQKVELAAKLEEQKIDLDKP) are compositionally biased toward basic and acidic residues. 2 disordered regions span residues 1-68 (MTAE…AMLK) and 141-165 (GETS…EEGV). Residues 24–43 (EVEDDDDNDEDDSEDDDEAE) show a composition bias toward acidic residues. At serine 36 the chain carries Phosphoserine. Over residues 44–59 (GHDGEAGGRSKQSRSE) the composition is skewed to basic and acidic residues. Positions 56 to 121 (SRSEKKSRKA…AKIEDLSSQL (66 aa)) constitute an NAC-A/B domain. Residues 141-152 (GETSSAATAAAV) show a composition bias toward low complexity. A compositionally biased stretch (acidic residues) spans 153 to 164 (QDDDDEEVDEEG). The UBA domain occupies 159-204 (EVDEEGVEPKDIELVMTQAGVSKPRAVKALKLANGDIVSAIMELTT).

It belongs to the NAC-alpha family.

May promote appropriate targeting of ribosome-nascent polypeptide complexes. The protein is Nascent polypeptide-associated complex subunit alpha-like protein 3 of Arabidopsis thaliana (Mouse-ear cress).